Here is a 321-residue protein sequence, read N- to C-terminus: Thioredoxin reductase (321 aa).

36–43 provides a ligand contact to FAD; sequence TGMEKGGQ. The cysteines at positions 136 and 139 are disulfide-linked. FAD is bound at residue 287-296; it reads DVMDHIYRQA.

Belongs to the class-II pyridine nucleotide-disulfide oxidoreductase family. In terms of assembly, homodimer. Requires FAD as cofactor.

It localises to the cytoplasm. The catalysed reaction is [thioredoxin]-dithiol + NADP(+) = [thioredoxin]-disulfide + NADPH + H(+). This chain is Thioredoxin reductase (trxB), found in Escherichia coli O157:H7.